Reading from the N-terminus, the 72-residue chain is Sec-independent protein translocase protein TatA (72 aa).

Residues 1–21 (MAGLSIWHVVIFAIVVILLFG) traverse the membrane as a helical segment. The tract at residues 47 to 72 (DEAASLNSPRTIDAQVKTSESTSVKS) is disordered. Residues 51–72 (SLNSPRTIDAQVKTSESTSVKS) show a composition bias toward polar residues.

It belongs to the TatA/E family. As to quaternary structure, the Tat system comprises two distinct complexes: a TatABC complex, containing multiple copies of TatA, TatB and TatC subunits, and a separate TatA complex, containing only TatA subunits. Substrates initially bind to the TatABC complex, which probably triggers association of the separate TatA complex to form the active translocon.

It localises to the cell inner membrane. In terms of biological role, part of the twin-arginine translocation (Tat) system that transports large folded proteins containing a characteristic twin-arginine motif in their signal peptide across membranes. TatA could form the protein-conducting channel of the Tat system. The polypeptide is Sec-independent protein translocase protein TatA (Acinetobacter baumannii (strain AB307-0294)).